Reading from the N-terminus, the 356-residue chain is Peptide methionine sulfoxide reductase MsrA/MsrB (356 aa).

The tract at residues 46-199 (HEIYLAGGCF…PNGYCHIDLE (154 aa)) is peptide methionine sulfoxide reductase A. The active site involves Cys-54. The 124-residue stretch at 216–339 (DAELKAKLTP…NSAAVKFIPL (124 aa)) folds into the MsrB domain. Residue Cys-328 is the Nucleophile of the active site.

It in the N-terminal section; belongs to the MsrA Met sulfoxide reductase family. In the C-terminal section; belongs to the MsrB Met sulfoxide reductase family.

The catalysed reaction is L-methionyl-[protein] + [thioredoxin]-disulfide + H2O = L-methionyl-(S)-S-oxide-[protein] + [thioredoxin]-dithiol. It carries out the reaction [thioredoxin]-disulfide + L-methionine + H2O = L-methionine (S)-S-oxide + [thioredoxin]-dithiol. It catalyses the reaction L-methionyl-[protein] + [thioredoxin]-disulfide + H2O = L-methionyl-(R)-S-oxide-[protein] + [thioredoxin]-dithiol. Has an important function as a repair enzyme for proteins that have been inactivated by oxidation. Catalyzes the reversible oxidation-reduction of methionine sulfoxide in proteins to methionine. The protein is Peptide methionine sulfoxide reductase MsrA/MsrB (msrAB) of Aggregatibacter actinomycetemcomitans (Actinobacillus actinomycetemcomitans).